Here is a 339-residue protein sequence, read N- to C-terminus: Lipoate--protein ligase (339 aa).

In terms of domain architecture, BPL/LPL catalytic spans 31–221; sequence FLDDDILFPY…QLLQIETISQ (191 aa). ATP contacts are provided by residues R73, 78 to 81, K135, and A139; that span reads GAVY. Position 135 (K135) interacts with (R)-lipoate.

Belongs to the LplA family.

The enzyme catalyses L-lysyl-[lipoyl-carrier protein] + (R)-lipoate + ATP = N(6)-[(R)-lipoyl]-L-lysyl-[lipoyl-carrier protein] + AMP + diphosphate + H(+). Its pathway is protein modification; protein lipoylation via exogenous pathway; protein N(6)-(lipoyl)lysine from lipoate: step 1/2. The protein operates within protein modification; protein lipoylation via exogenous pathway; protein N(6)-(lipoyl)lysine from lipoate: step 2/2. Functionally, catalyzes specifically the lipoylation of GcvH-L (SpyM50867), likely via the ATP-dependent activation of lipoate to lipoyl-AMP and the transfer of the activated lipoyl onto the lipoyl domain of the target protein. This chain is Lipoate--protein ligase, found in Streptococcus pyogenes serotype M5 (strain Manfredo).